Here is a 208-residue protein sequence, read N- to C-terminus: Protein GrpE (208 aa).

Residues 1 to 62 (MTEKDESVKS…ETAVDPKDEE (62 aa)) are disordered. The segment covering 46-55 (SNEESSEETA) has biased composition (acidic residues).

The protein belongs to the GrpE family. As to quaternary structure, homodimer.

The protein localises to the cytoplasm. Its function is as follows. Participates actively in the response to hyperosmotic and heat shock by preventing the aggregation of stress-denatured proteins, in association with DnaK and GrpE. It is the nucleotide exchange factor for DnaK and may function as a thermosensor. Unfolded proteins bind initially to DnaJ; upon interaction with the DnaJ-bound protein, DnaK hydrolyzes its bound ATP, resulting in the formation of a stable complex. GrpE releases ADP from DnaK; ATP binding to DnaK triggers the release of the substrate protein, thus completing the reaction cycle. Several rounds of ATP-dependent interactions between DnaJ, DnaK and GrpE are required for fully efficient folding. The sequence is that of Protein GrpE from Staphylococcus haemolyticus (strain JCSC1435).